The sequence spans 357 residues: Trans-enoyl reductase buaC (357 aa).

Position 50–53 (50–53) interacts with NADP(+); the sequence is VDTK. Residue 135-142 coordinates substrate; the sequence is TALVSACM. Residues 170–173, 193–196, tyrosine 211, and 258–259 each bind NADP(+); these read STAT, SPKN, and LN. Residue 278-282 coordinates substrate; it reads ATLIT. 347-348 contacts NADP(+); it reads IS.

This sequence belongs to the zinc-containing alcohol dehydrogenase family. As to quaternary structure, monomer.

The protein operates within mycotoxin biosynthesis. In terms of biological role, trans-enoyl reductase; part of the gene cluster that mediates the biosynthesis of burnettramic acids, an unusual class of bolaamphiphilic pyrrolizidinediones that display potent antibacterial, antifungal, and cytotoxic activities. The first step of the biosynthesis of burnettramic acids is the hydroxylation of proline by the proline hydroxylase buaE to generate 4-hydroxyproline. The PKS-NRPS buaA and trans-enoyl reductase buaC construct the highly reduced polyketide chain, and the condensation (C) domain of buaA then catalyzes the amide bond formation with the activated 4-hydroxyproline. This is followed by the R domain releasing the nascent polyketide-peptide directly via a Dieckmann condensation to afford a tetramic acid fused to the hydroxyproline, generating the bicyclic pyrrolidinedione moiety. The cytochrome P450 monooxygenases buaD and buaG are likely responsible for the multiple hydroxylations on the polyketide chain and its terminus, although in the heterologous context, buaD does not appear to be required. Therefore, while buaG may be a multifunctional cytochrome P450 monooxygenase, it cannot be ruled out that the two secondary alcohols on the polyketide chain could have an acetate origin. Finally, the glycosyltransferase buaB transfers beta-D-mannose to the aglycone burnettramic acid A to form burnettramic acid A. Burnettramic acid B is a minor cis-pyrrolizidine epimer of burnettramic acid A and it is likely that small amounts of it form naturally in acidic environments. The chain is Trans-enoyl reductase buaC from Petromyces alliaceus (Aspergillus alliaceus).